The following is a 283-amino-acid chain: Pantothenate synthetase (283 aa).

34 to 41 (MGALHEGH) contacts ATP. The active-site Proton donor is H41. Q65 is a (R)-pantoate binding site. Q65 lines the beta-alanine pocket. 152–155 (GEKD) is a binding site for ATP. Q158 is a (R)-pantoate binding site. Position 189 to 192 (189 to 192 (MSSR)) interacts with ATP.

It belongs to the pantothenate synthetase family. In terms of assembly, homodimer.

The protein localises to the cytoplasm. It catalyses the reaction (R)-pantoate + beta-alanine + ATP = (R)-pantothenate + AMP + diphosphate + H(+). The protein operates within cofactor biosynthesis; (R)-pantothenate biosynthesis; (R)-pantothenate from (R)-pantoate and beta-alanine: step 1/1. Its function is as follows. Catalyzes the condensation of pantoate with beta-alanine in an ATP-dependent reaction via a pantoyl-adenylate intermediate. This chain is Pantothenate synthetase, found in Rhodopseudomonas palustris (strain BisA53).